Consider the following 540-residue polypeptide: Early growth response protein 1 (540 aa).

2 disordered regions span residues Met-1 to Phe-105 and Val-162 to Pro-240. Positions Ser-64–Ser-75 are enriched in gly residues. Over residues Pro-167–Ser-190 the composition is skewed to low complexity. The segment covering Ala-192–Ile-201 has biased composition (polar residues). Lys-304 is covalently cross-linked (Glycyl lysine isopeptide (Lys-Gly) (interchain with G-Cter in SUMO2)). Residues Pro-317 to Tyr-337 form a disordered region. The segment at Tyr-337 to His-361 adopts a C2H2-type 1 zinc-finger fold. The C2H2-type 2; degenerate zinc-finger motif lies at Pro-366–His-388. The C2H2-type 3 zinc finger occupies Phe-394–His-416. Positions Asp-407–Pro-482 are disordered. Positions Arg-411 to Asp-421 are enriched in basic residues. The span at Ser-427–Pro-482 shows a compositional bias: low complexity.

It belongs to the EGR C2H2-type zinc-finger protein family. As to quaternary structure, interacts with SNAI1 and SP1 upon 12-O-tetradecanoylphorbol-13-acetate (TPA) induction.

It localises to the nucleus. Its subcellular location is the cytoplasm. Functionally, transcriptional regulator. Recognizes and binds to the DNA sequence 5'-GCG(T/G)GGGCG-3'(EGR-site) in the promoter region of target genes. Binds double-stranded target DNA, irrespective of the cytosine methylation status. Regulates the transcription of numerous target genes, and thereby plays an important role in regulating the response to growth factors, DNA damage, and ischemia. Plays a role in the regulation of cell survival, proliferation and cell death. Activates expression of p53/TP53 and TGFB1, and thereby helps prevent tumor formation. Required for normal progress through mitosis and normal proliferation of hepatocytes after partial hepatectomy. Mediates responses to ischemia and hypoxia; regulates the expression of proteins such as IL1B and CXCL2 that are involved in inflammatory processes and development of tissue damage after ischemia. Regulates biosynthesis of luteinizing hormone (LHB) in the pituitary. Regulates the amplitude of the expression rhythms of clock genes: BMAL1, PER2 and NR1D1 in the liver via the activation of PER1 (clock repressor) transcription. Regulates the rhythmic expression of core-clock gene BMAL1 in the suprachiasmatic nucleus (SCN). The polypeptide is Early growth response protein 1 (EGR1) (Bos taurus (Bovine)).